A 252-amino-acid chain; its full sequence is Glucosamine-6-phosphate deaminase (252 aa).

Aspartate 67 functions as the Proton acceptor; for enolization step in the catalytic mechanism. Asparagine 137 acts as the For ring-opening step in catalysis. Histidine 139 functions as the Proton acceptor; for ring-opening step in the catalytic mechanism. Catalysis depends on glutamate 144, which acts as the For ring-opening step.

Belongs to the glucosamine/galactosamine-6-phosphate isomerase family. NagB subfamily.

It catalyses the reaction alpha-D-glucosamine 6-phosphate + H2O = beta-D-fructose 6-phosphate + NH4(+). It participates in amino-sugar metabolism; N-acetylneuraminate degradation; D-fructose 6-phosphate from N-acetylneuraminate: step 5/5. Its function is as follows. Catalyzes the reversible isomerization-deamination of glucosamine 6-phosphate (GlcN6P) to form fructose 6-phosphate (Fru6P) and ammonium ion. This is Glucosamine-6-phosphate deaminase from Staphylococcus aureus (strain Mu3 / ATCC 700698).